The primary structure comprises 262 residues: Thiazole synthase (262 aa).

Residue K96 is the Schiff-base intermediate with DXP of the active site. 1-deoxy-D-xylulose 5-phosphate is bound by residues G157, 184-185, and 206-207; these read AG and NT.

It belongs to the ThiG family. In terms of assembly, homotetramer. Forms heterodimers with either ThiH or ThiS.

The protein localises to the cytoplasm. It carries out the reaction [ThiS sulfur-carrier protein]-C-terminal-Gly-aminoethanethioate + 2-iminoacetate + 1-deoxy-D-xylulose 5-phosphate = [ThiS sulfur-carrier protein]-C-terminal Gly-Gly + 2-[(2R,5Z)-2-carboxy-4-methylthiazol-5(2H)-ylidene]ethyl phosphate + 2 H2O + H(+). It functions in the pathway cofactor biosynthesis; thiamine diphosphate biosynthesis. Functionally, catalyzes the rearrangement of 1-deoxy-D-xylulose 5-phosphate (DXP) to produce the thiazole phosphate moiety of thiamine. Sulfur is provided by the thiocarboxylate moiety of the carrier protein ThiS. In vitro, sulfur can be provided by H(2)S. The protein is Thiazole synthase of Legionella pneumophila (strain Paris).